The chain runs to 162 residues: Caveolin-2 (162 aa).

The Cytoplasmic portion of the chain corresponds to 1-86 (MGLETEKADV…FEISKYVMYK (86 aa)). Tyrosine 19 is modified (phosphotyrosine; by SRC). Phosphoserine occurs at positions 20 and 23. A Phosphotyrosine; by SRC modification is found at tyrosine 27. Residue serine 36 is modified to Phosphoserine. An intramembrane region (helical) is located at residues 87–107 (FLTVFLAIPLAFIAGILFATL). Residues 108–162 (SCLHIWILMPFVKTCLMVLPSVQTIWKSVTDVIIAPLCTSVGRSFSSVSLQLSQD) are Cytoplasmic-facing.

The protein belongs to the caveolin family. Monomer or homodimer. Interacts with CAV1; the interaction forms a stable heterooligomeric complex that is required for targeting to lipid rafts and for caveolae formation. Tyrosine phosphorylated forms do not form heterooligomers with the Tyr-19-phosphorylated form existing as a monomer or dimer, and the Tyr-27-form as a monomer only. Interacts (tyrosine phosphorylated form) with the SH2 domain-containing proteins, RASA1, NCK1 and SRC. Interacts (tyrosine phosphorylated form) with INSR, the interaction (Tyr-27-phosphorylated form) is increased on insulin stimulation. Interacts (Tyr-19 phosphorylated form) with MAPK1 (phosphorylated form); the interaction, promoted by insulin, leads to nuclear location and MAPK1 activation. Interacts with STAT3; the interaction is increased on insulin-induced tyrosine phosphorylation leading to STAT activation. In terms of processing, phosphorylated on serine and tyrosine residues. CAV1 promotes phosphorylation on Ser-23 which then targets the complex to the plasma membrane, lipid rafts and caveolae. Phosphorylation on Ser-36 appears to modulate mitosis in endothelial cells. Phosphorylation on both Tyr-19 and Tyr-27 is required for insulin-induced 'Ser-727' phosphorylation of STAT3 and its activation. Phosphorylation on Tyr-19 is required for insulin-induced phosphorylation of MAPK1 and DNA binding of STAT3. Tyrosine phosphorylation is induced by both EGF and insulin (By. similarity).

It localises to the nucleus. The protein resides in the cytoplasm. The protein localises to the golgi apparatus membrane. It is found in the cell membrane. Its subcellular location is the membrane. It localises to the caveola. May act as a scaffolding protein within caveolar membranes. Interacts directly with G-protein alpha subunits and can functionally regulate their activity. Acts as an accessory protein in conjunction with CAV1 in targeting to lipid rafts and driving caveolae formation. The Ser-36 phosphorylated form has a role in modulating mitosis in endothelial cells. Positive regulator of cellular mitogenesis of the MAPK signaling pathway. Required for the insulin-stimulated nuclear translocation and activation of MAPK1 and STAT3, and the subsequent regulation of cell cycle progression. This chain is Caveolin-2 (CAV2), found in Pongo abelii (Sumatran orangutan).